A 1503-amino-acid polypeptide reads, in one-letter code: Translocase of chloroplast 159, chloroplastic (1503 aa).

Over residues 1-24 the composition is skewed to polar residues; it reads MDSKSVTPEPTNPFYASSGQSGKT. Positions 1 to 210 are disordered; that stretch reads MDSKSVTPEP…GGKVDVDDKS (210 aa). The chain crosses the membrane as a helical span at residues 21 to 37; that stretch reads SGKTYASVVAAAAAAAA. Residue Ser-71 is modified to Phosphoserine. Composition is skewed to basic and acidic residues over residues 85–98 and 176–210; these read KVSD…KEDS and SESK…DDKS. A phosphoserine mark is found at Ser-210, Ser-281, and Ser-288. Disordered regions lie at residues 298-338 and 429-464; these read KFTS…DVEK and VHNK…SEGD. Residues 447–456 show a composition bias toward basic and acidic residues; sequence ESDKATEEGG. Residues Ser-448, Ser-461, Ser-589, Ser-609, Ser-630, Ser-632, and Ser-665 each carry the phosphoserine modification. Positions 610–633 are disordered; the sequence is FGGKEVDQEPSGEGVTRVDGSESE. Positions 781 to 804 form a coiled coil; it reads EEEKQKLEKLQSLRVKFLRLLQRL. Positions 853–1087 constitute an AIG1-type G domain; it reads IFSLNILVLG…RPQEPLDHRK (235 aa). The segment at 862-869 is G1; the sequence is GKAGVGKS. GTP is bound by residues 865–870 and 884–889; these read GVGKSA and DAFGLS. Residue Ser-869 participates in Mg(2+) binding. The segment at 884-887 is homodimerization; it reads DAFG. The tract at residues 889 to 893 is G2; sequence STTSV. The interval 909–912 is G3; sequence DTPG. Residues 947-952 are homodimerization; sequence RLDTQT. Residues 981–984 form a G4 region; it reads THAA. GTP is bound by residues His-982 and 1035 to 1036; that span reads EN. The tract at residues 1035-1037 is G5; it reads ENH. A coiled-coil region spans residues 1175-1203; sequence DYRVKLLQKKQWREELKRMKEMKKNGKKL. The disordered stretch occupies residues 1203 to 1222; it reads LGESEFGYPGEEDDPENGAP.

The protein belongs to the TRAFAC class TrmE-Era-EngA-EngB-Septin-like GTPase superfamily. AIG1/Toc34/Toc159-like paraseptin GTPase family. TOC159 subfamily. Homodimer and heterodimer with TOC33. Part of the TOC core complex that includes 1 protein for the specific recognition of transit peptides surrounded by a ring composed of four proteins forming translocation channels, and four to five GTP-binding proteins providing energy. This core complex can interact with components of the TIC complex to form a larger import complex. Chloroplastic protein precursor such as prSS (precursor of the RuBisCO small subunit) interacts with these complexes. The TOC complex contains a specific subset of polar lipids such as digalactosyldiacylglyceride (DGDG), phosphatidylcholine (PC) and phosphatidylglycerol (PG). Interacts with SP1. Mg(2+) is required as a cofactor. Post-translationally, phosphorylated by KOC1.

The protein resides in the plastid. It localises to the chloroplast outer membrane. The protein localises to the cytoplasm. Functionally, GTPase involved in protein precursor import into chloroplasts. Seems to recognize chloroplast-destined precursor proteins and regulate their presentation to the translocation channel through GTP hydrolysis. Required for chloroplast biogenesis. Probably specialized in the import of nuclear encoded photosynthetic preproteins from the cytoplasm to the chloroplast. This Arabidopsis thaliana (Mouse-ear cress) protein is Translocase of chloroplast 159, chloroplastic.